Here is a 546-residue protein sequence, read N- to C-terminus: MGSRNSSSAGTGSGDPSEGLPRRGAGLRRSEEEEEEDEDVDLAQVLAYLLRRGQVRLVQGGGAANLQLIQALSDSEEEHDSAWDGRLGDRYNPPVDATPDTRELECSEIKTQVELATGRLGLRRAARELSFPQMLHQRERGLCHQGSFSLGERSRVMSHFLPNDLGFTDTYSQKAFCGIYSKDGQIFMSACQDQTIRLYDCRYGRFRKFKSIKARDVGWSVLDVAFTPDGNHFLYSSWSDYIHICNIYGEGDTHTALDLRPDERRFAVFSIAVSSDGREVLGGANDGCLYVFDREQNRRTLQIESHEDDVNAVAFADVSSQILFSGGDDAICKVWDRRTMREDDPKPVGALAGHQDGITFIDSKGDARYLISNSKDQTIKLWDIRRFSSREGMEASRQAATQQNWDYRWQQVPKKAWRKLKLPGDSSLMTYRGHGVLHTLIRCRFSPTHSTGQQFIYSGCSTGKVVVYDLLSGHVVKKLTTHKACVRDVSWHPFEEKIVSSSWDGNLRLWQYRQAEYFQDDMPESEEHPSTPAPMSHPSTAFSSPQ.

Residues Met1–Gly10 are compositionally biased toward polar residues. The disordered stretch occupies residues Met1 to Val40. 2 positions are modified to phosphoserine: Ser73 and Ser75. Residues His79–Asp100 are disordered. The span at Asp80 to Asp89 shows a compositional bias: basic and acidic residues. WD repeat units follow at residues Thr170–Lys210, Asp216–Asp258, Glu263–Gln302, Ser305–Pro345, Gly353–Gly392, Gly435–Thr480, and Thr481–Asp520. Residues Asp521 to Gln546 are disordered. Polar residues predominate over residues His537–Gln546.

In terms of assembly, interacts with DDB1 and CUL4A.

Its pathway is protein modification; protein ubiquitination. Its function is as follows. May function as a substrate receptor for CUL4-DDB1 E3 ubiquitin-protein ligase complex. The chain is DDB1- and CUL4-associated factor 11 (DCAF11) from Bos taurus (Bovine).